The chain runs to 567 residues: Urease subunit alpha (567 aa).

Residues 129-567 enclose the Urease domain; that stretch reads GGIDTHIHWI…LPMAQRYFLF (439 aa). Ni(2+) is bound by residues H134, H136, and K217. K217 carries the post-translational modification N6-carboxylysine. H219 serves as a coordination point for substrate. The Ni(2+) site is built by H246 and H272. Catalysis depends on H320, which acts as the Proton donor. A Ni(2+)-binding site is contributed by D360.

It belongs to the metallo-dependent hydrolases superfamily. Urease alpha subunit family. Heterotrimer of UreA (gamma), UreB (beta) and UreC (alpha) subunits. Three heterotrimers associate to form the active enzyme. The apoenzyme interacts with an accessory complex composed of UreD, UreF and UreG, which is required for the assembly of the nickel containing metallocenter of UreC. The UreE protein may also play a direct role as a metallochaperone in nickel transfer to the urease apoprotein. The cofactor is Ni cation. Post-translationally, carboxylation allows a single lysine to coordinate two nickel ions.

It localises to the cytoplasm. The catalysed reaction is urea + 2 H2O + H(+) = hydrogencarbonate + 2 NH4(+). Its pathway is nitrogen metabolism; urea degradation; CO(2) and NH(3) from urea (urease route): step 1/1. Its activity is regulated as follows. The apoenzyme can be activated in vitro in the presence of nickel ions and carbon dioxide, which promotes carboxylation of Lys-217. The chain is Urease subunit alpha from Klebsiella aerogenes (Enterobacter aerogenes).